The primary structure comprises 185 residues: Segregation and condensation protein B (185 aa).

Belongs to the ScpB family. Homodimer. Homodimerization may be required to stabilize the binding of ScpA to the Smc head domains. Component of a cohesin-like complex composed of ScpA, ScpB and the Smc homodimer, in which ScpA and ScpB bind to the head domain of Smc. The presence of the three proteins is required for the association of the complex with DNA.

The protein resides in the cytoplasm. In terms of biological role, participates in chromosomal partition during cell division. May act via the formation of a condensin-like complex containing Smc and ScpA that pull DNA away from mid-cell into both cell halves. This Alkaliphilus oremlandii (strain OhILAs) (Clostridium oremlandii (strain OhILAs)) protein is Segregation and condensation protein B.